The sequence spans 673 residues: UvrABC system protein B (673 aa).

One can recognise a Helicase ATP-binding domain in the interval 26 to 183 (EGLEDGLAHQ…RRLAELQYTR (158 aa)). 39–46 (GVTGSGKT) serves as a coordination point for ATP. The short motif at 92-115 (YYDYYQPEAYVPSSDTFIEKDASV) is the Beta-hairpin element. In terms of domain architecture, Helicase C-terminal spans 431 to 597 (QVDDLLSEIR…GLNKKVVDIL (167 aa)). The UVR domain maps to 633–668 (QQKIHELEGQMMQHAQNLEFEEAAQIRDQLHQLREL).

It belongs to the UvrB family. As to quaternary structure, forms a heterotetramer with UvrA during the search for lesions. Interacts with UvrC in an incision complex.

The protein resides in the cytoplasm. The UvrABC repair system catalyzes the recognition and processing of DNA lesions. A damage recognition complex composed of 2 UvrA and 2 UvrB subunits scans DNA for abnormalities. Upon binding of the UvrA(2)B(2) complex to a putative damaged site, the DNA wraps around one UvrB monomer. DNA wrap is dependent on ATP binding by UvrB and probably causes local melting of the DNA helix, facilitating insertion of UvrB beta-hairpin between the DNA strands. Then UvrB probes one DNA strand for the presence of a lesion. If a lesion is found the UvrA subunits dissociate and the UvrB-DNA preincision complex is formed. This complex is subsequently bound by UvrC and the second UvrB is released. If no lesion is found, the DNA wraps around the other UvrB subunit that will check the other stand for damage. This is UvrABC system protein B from Salmonella arizonae (strain ATCC BAA-731 / CDC346-86 / RSK2980).